A 181-amino-acid chain; its full sequence is Large ribosomal subunit protein uL5c (181 aa).

The protein belongs to the universal ribosomal protein uL5 family. In terms of assembly, part of the 50S ribosomal subunit; contacts the 5S rRNA.

It is found in the plastid. Its subcellular location is the chloroplast. Binds 5S rRNA, forms part of the central protuberance of the 50S subunit. The polypeptide is Large ribosomal subunit protein uL5c (rpl5) (Pyropia yezoensis (Susabi-nori)).